The primary structure comprises 447 residues: Probable alpha-galactosidase B (447 aa).

The N-terminal stretch at 1-25 (MTTFFSLTTAAAVLTLARGSNALVR) is a signal peptide. Disulfide bonds link cysteine 45–cysteine 77 and cysteine 127–cysteine 157. The Nucleophile role is filled by aspartate 155. N-linked (GlcNAc...) asparagine glycans are attached at residues asparagine 162 and asparagine 180. 225-229 (EWGQA) lines the substrate pocket. An N-linked (GlcNAc...) asparagine glycan is attached at asparagine 236. Aspartate 247 serves as the catalytic Proton donor. N-linked (GlcNAc...) asparagine glycosylation occurs at asparagine 286.

Belongs to the glycosyl hydrolase 27 family.

It is found in the secreted. It carries out the reaction Hydrolysis of terminal, non-reducing alpha-D-galactose residues in alpha-D-galactosides, including galactose oligosaccharides, galactomannans and galactolipids.. Hydrolyzes a variety of simple alpha-D-galactoside as well as more complex molecules such as oligosaccharides and polysaccharides. The polypeptide is Probable alpha-galactosidase B (aglB) (Aspergillus fumigatus (strain ATCC MYA-4609 / CBS 101355 / FGSC A1100 / Af293) (Neosartorya fumigata)).